The following is a 470-amino-acid chain: 63 kDa sperm flagellar membrane protein (470 aa).

Positions 1–25 (MFCHLHCMLVVFSLLLTLTGSFVNA) are cleaved as a signal peptide. Residues 41–80 (PPDPCASNPCTIASTHCVAAGESHTCECRPGYFETNGNCT) enclose the EGF-like 1 domain. 3 cysteine pairs are disulfide-bonded: Cys45-Cys57, Cys50-Cys66, and Cys68-Cys79. Asn78, Asn170, and Asn219 each carry an N-linked (GlcNAc...) asparagine glycan. In terms of domain architecture, SEA spans 81-205 (VAQQFAGSFS…STITVSDFDE (125 aa)). In terms of domain architecture, EGF-like 2; calcium-binding spans 202–250 (DFDECASADDNDCDPNANCTNTAGSFTCECDTELYDNSPNTEEPGRVCI). Cystine bridges form between Cys206/Cys220, Cys214/Cys229, Cys231/Cys249, Cys253/Cys265, Cys258/Cys277, and Cys279/Cys291. Residues 249–292 (CIAPCDPGLCTRPNEICNNGGTIEDDNLCKCIEGYDYTQYGDCD) enclose the EGF-like 3 domain. N-linked (GlcNAc...) asparagine glycosylation occurs at Asn322. Gly446 carries GPI-anchor amidated glycine lipidation. Residues 447–470 (SQRHLPVCGVLSLVVTTLLALMLH) constitute a propeptide, removed in mature form.

In terms of tissue distribution, sperm.

Its subcellular location is the cell projection. It is found in the cilium. The protein resides in the flagellum membrane. The protein is 63 kDa sperm flagellar membrane protein of Strongylocentrotus purpuratus (Purple sea urchin).